Consider the following 640-residue polypeptide: MSLIKKLPDIVANKISAGEVVQRPASAVKELLENAIDAGADEITLAIKAAGKTLIQVIDNGCGLSEEDATLCFERFATSKISDVGDLENLHTLGFRGEALASIASVSQVELKTKRYDDRTGTLVKISGGRFEEVSRTETPNGTAFSIRNLFYNVPARRKFLKTNATEYKHIFETVQAQTLVYPDIKWRFYSDDEEIFSFLNNNLSERLDYFFGKDFSQNLIEFTEENDFMKLRGYLGKPAMMKRTKNQQFLFINNRVTQSKLLSSAIMTAYGELLGEREYPFFLIYMDIAPHYIDVNVHPTKMEVKFDDERNIYNMVHSVVKHRIKTLDFSPNVQVEEKPDSPRPTGESFNFPGVAKRLSYNDRDADMRSSNALFRDYKTYYKAQDERAEPGFFANPKREMDWRSSLPAHTEASLTPPKQAEPEGNPTFHDGSRQMEIFIQSRDDEPATAGQERFVWQLHNTYILTQIKSGLLIIDQHVAHERILYERAIAVMESNVPNSQQLLFPHSAKLSAWEFDVLKEIKTDLVQLGFSLRILDQRTVLVEGIPPDVMPGREERILHEMLEQYQDYQQNLKLEQRDNVAKSYACRSSIMAGQKLSRNEMTSLIDQLFATSMPYVCPHGRPIIIKLSIEELDKMFGRS.

Disordered regions lie at residues 332–353 and 408–431; these read PNVQ…FNFP and PAHT…TFHD.

The protein belongs to the DNA mismatch repair MutL/HexB family.

Functionally, this protein is involved in the repair of mismatches in DNA. It is required for dam-dependent methyl-directed DNA mismatch repair. May act as a 'molecular matchmaker', a protein that promotes the formation of a stable complex between two or more DNA-binding proteins in an ATP-dependent manner without itself being part of a final effector complex. The chain is DNA mismatch repair protein MutL from Chloroherpeton thalassium (strain ATCC 35110 / GB-78).